The chain runs to 126 residues: Hydrogenase maturation factor HypA (126 aa).

His-2 is a Ni(2+) binding site. Residues Cys-78, Cys-81, Cys-97, and Cys-100 each contribute to the Zn(2+) site.

The protein belongs to the HypA/HybF family.

Functionally, involved in the maturation of [NiFe] hydrogenases. Required for nickel insertion into the metal center of the hydrogenase. The polypeptide is Hydrogenase maturation factor HypA (Methanococcus maripaludis (strain C6 / ATCC BAA-1332)).